Reading from the N-terminus, the 582-residue chain is Trans-ocimene synthase, chloroplastic (582 aa).

A chloroplast-targeting transit peptide spans 1–35; the sequence is MSLIIQSLPHWSRIPPRPPQLSQFQNSSRPKPLIQ. (2E)-geranyl diphosphate-binding residues include R296, D333, D337, R474, and D477. The Mg(2+) site is built by D333 and D337. The DDXXD motif signature appears at 333-337; it reads DDIYD. Residues D477, T481, and E485 each coordinate Mg(2+).

This sequence belongs to the terpene synthase family. Tpsb subfamily. Monomer. Mg(2+) is required as a cofactor. It depends on Mn(2+) as a cofactor. In terms of tissue distribution, expressed in male and female leaves. Barely detectable in fruits and shoots.

Its subcellular location is the plastid. It localises to the chloroplast. It carries out the reaction (2E)-geranyl diphosphate = (E)-beta-ocimene + diphosphate. Its pathway is secondary metabolite biosynthesis; terpenoid biosynthesis. Its function is as follows. Monoterpene synthase (TPS) involved in the biosynthesis of monoterpene natural products used by traditional Chinese medicine to treat headache, inflammation and intoxication. Catalyzes the conversion of (2E)-geranyl diphosphate (GPP) into (E)-beta-ocimene. This is Trans-ocimene synthase, chloroplastic from Litsea cubeba (Aromatic litsea).